A 112-amino-acid chain; its full sequence is MEAKAYLNMIRISPRKVRLVADTIRNKPVAAAIATLYNLDKRSAEPVLKLLNSAIANAVNNNGMDADKLFVKTIFVNEGPTLKRFRPRAHGRAYEILKRTSHVTIIVSDERI.

This sequence belongs to the universal ribosomal protein uL22 family. In terms of assembly, part of the 50S ribosomal subunit.

Its function is as follows. This protein binds specifically to 23S rRNA; its binding is stimulated by other ribosomal proteins, e.g. L4, L17, and L20. It is important during the early stages of 50S assembly. It makes multiple contacts with different domains of the 23S rRNA in the assembled 50S subunit and ribosome. Functionally, the globular domain of the protein is located near the polypeptide exit tunnel on the outside of the subunit, while an extended beta-hairpin is found that lines the wall of the exit tunnel in the center of the 70S ribosome. This is Large ribosomal subunit protein uL22 from Mesoplasma florum (strain ATCC 33453 / NBRC 100688 / NCTC 11704 / L1) (Acholeplasma florum).